The following is a 1412-amino-acid chain: DNA-directed RNA polymerase subunit beta' (1412 aa).

Positions 71, 73, 86, and 89 each coordinate Zn(2+). Residues Asp461, Asp463, and Asp465 each contribute to the Mg(2+) site. Zn(2+)-binding residues include Cys815, Cys889, Cys896, and Cys899.

This sequence belongs to the RNA polymerase beta' chain family. The RNAP catalytic core consists of 2 alpha, 1 beta, 1 beta' and 1 omega subunit. When a sigma factor is associated with the core the holoenzyme is formed, which can initiate transcription. The cofactor is Mg(2+). Zn(2+) is required as a cofactor.

The enzyme catalyses RNA(n) + a ribonucleoside 5'-triphosphate = RNA(n+1) + diphosphate. Its function is as follows. DNA-dependent RNA polymerase catalyzes the transcription of DNA into RNA using the four ribonucleoside triphosphates as substrates. This Actinobacillus pleuropneumoniae serotype 5b (strain L20) protein is DNA-directed RNA polymerase subunit beta'.